Here is a 241-residue protein sequence, read N- to C-terminus: Probable 2-phosphosulfolactate phosphatase (241 aa).

This sequence belongs to the ComB family. Mg(2+) serves as cofactor.

The enzyme catalyses (2R)-O-phospho-3-sulfolactate + H2O = (2R)-3-sulfolactate + phosphate. The sequence is that of Probable 2-phosphosulfolactate phosphatase from Caldanaerobacter subterraneus subsp. tengcongensis (strain DSM 15242 / JCM 11007 / NBRC 100824 / MB4) (Thermoanaerobacter tengcongensis).